Here is a 332-residue protein sequence, read N- to C-terminus: Galactinol synthase 7 (332 aa).

Lys-101 is a catalytic residue. Residues Asp-117, Asp-119, and His-255 each coordinate Mn(2+).

This sequence belongs to the glycosyltransferase 8 family. Galactosyltransferase subfamily. Requires a divalent metal cation as cofactor.

Its subcellular location is the cytoplasm. It carries out the reaction myo-inositol + UDP-alpha-D-galactose = alpha-D-galactosyl-(1-&gt;3)-1D-myo-inositol + UDP + H(+). In terms of biological role, galactinol synthase involved in the biosynthesis of raffinose family oligosaccharides (RFOs) that function as osmoprotectants. May promote plant stress tolerance. The protein is Galactinol synthase 7 (GOLS7) of Arabidopsis thaliana (Mouse-ear cress).